The following is a 122-amino-acid chain: MIQSESRLKVADNSGAREILTIKVLGGSGRKTANIGDVIVATIKQATPGGVVKKGEVVKAVIVRTKSGARRVDGSYIKFDENAAVIINDDKTPKGTRIFGPVARELRDSDFMKIVSLAPEVL.

The protein belongs to the universal ribosomal protein uL14 family. Part of the 50S ribosomal subunit. Forms a cluster with proteins L3 and L19. In the 70S ribosome, L14 and L19 interact and together make contacts with the 16S rRNA in bridges B5 and B8.

Functionally, binds to 23S rRNA. Forms part of two intersubunit bridges in the 70S ribosome. The polypeptide is Large ribosomal subunit protein uL14 (Latilactobacillus sakei subsp. sakei (strain 23K) (Lactobacillus sakei subsp. sakei)).